Consider the following 221-residue polypeptide: Deep sea actinoporin Cjtox II (221 aa).

A signal peptide spans 1–19; it reads MNRLIIVCLVAAMIYSTIA. Residues 20 to 42 constitute a propeptide that is removed on maturation; it reads LPMKEDISNDERPISVNEEPVKK. Phosphocholine-binding residues include serine 96, valine 129, serine 147, proline 149, tyrosine 175, tyrosine 179, and tyrosine 180. The interval 147–162 is trp-rich region, which is important for the binding to lipid membrane; that stretch reads SVPYDYNWYENWWNIK. The short motif at 186–188 is the Cell attachment site, crucial for protein stability element; it reads KGD.

Belongs to the actinoporin family. Sea anemone subfamily. In terms of assembly, octamer or nonamer in membranes. Monomer in the soluble state. In terms of tissue distribution, expressed in actinopharynx and in gastric filaments. Is not expressed in tentacles.

It localises to the secreted. It is found in the nematocyst. The protein localises to the target cell membrane. May be involved in digestion of prey. Pore-forming protein that forms cations-selective hydrophilic pores of around 1 nm and causes cytolysis. Pore formation is a multi-step process that involves specific recognition of membrane sphingomyelin (but neither cholesterol nor phosphatidylcholine) using aromatic rich region and adjacent phosphocholine (POC) binding site, firm binding to the membrane (mainly driven by hydrophobic interactions) accompanied by the transfer of the N-terminal region to the lipid-water interface and finally pore formation after oligomerization of monomers. Shows hemolytic activity on equine erythrocytes. Hemolysis is highly inhibited in presence of sphingomyelin, suggesting that this protein targets sphingomyelin. The chain is Deep sea actinoporin Cjtox II from Cribrinopsis japonica (Deep-sea anemone).